A 1403-amino-acid polypeptide reads, in one-letter code: MAHYSKVDLDEEFERFMKELSDDSFENSNETPSQPNKDRKKKDTAPWWIAEDGFEDDGLLGTNVSYLKTKKTYQPITDMEEENEKVQFLKSSGTSVLSVDSLEANELVASELHHSTLGLGLDTLEEQEEKEQFFARLEKGLTSSIDYSKLNQELDSDDSAQFRVLHRYQGNVEPAEGGRENESEHKELPETYSDDFEDAEDTDEPLITKDEETRPKENPESGKGSFPNQEEEKTGMLANVVLLDSFDSVEDVDLNNHERPTPKAKALPEMAGGELAETGVSYGQSSGDTEALHQAYHHVAHSLGDTGEPRIEASPGHSVRSSAKDGLQENEESSKNISTTESDLPTVEELMKPIRIDSYGIRGFDLQPVSLQKAVGSKEAESVSSLPLTVNTNTMSQDTRHVSPFPHEQDESVVLHRTAGEGVGSSCPATEEHLDKMYLEILRKKTSVNPSLLPQDNKANQTSRSRLSAREEAPVTSKQVPCKKARSAPPLPRRKPQSGLYASARSSGYSKPSSPLQFFSALEKKTSKDNTKTKNVRPIPTSNQFRKREILSGTKLIKPAALNKPSPHREGSPATPKRPEDPSDDSFVQLQTETLGSYGGNREKELLMLKRAQDAEEKWRGAQALIEQIKMTFSEKEKELENTVESLKRQQERELFKLNQENYILQAKLSSFEETSRKQRWLQFGETSDPLTEEKLKQIQKEIQEQETLLQGYQQENERLYSQVKDLQEQNKKNEERMFKENQNLFSELASLKEQMHKNHFLPQAVENIEPTKNQSFTDLLAELRAAQKEKNHLMEDIKRLKQDKQALEVDLERVKRERDQAKDQIAYTTGEKLYEIKILEETHKQEVSRLQKRLQWYAENQELLDKDAARLREANEETERLKLEIEKLKTESGSPANQQRLRSKERALDAKRIQDLERQVKEMEGILKRRYPNSLPALILAASAAGDSVDRNTVDFMERRIKKLEADLEGKDEEAKKSLRTMEQQFQKMKIQYEQRLEEQEQMLAHRQREAPQNQHNSSSRLKALETELGGIKEAHQITVRKLEAEIDVLKHQNAHLEHKKNDKEDQDLQSIEFQVEQAQARAKLARLNEELAAKGREIQDLTKTVERLQKERRMMLSRQSPRGREEMAAKRLKKEILHPNSGNANAFSETLGAKLYHPHTFTDSHISEVLEENYRLRSELEGLTLEREKLKMESEAAVCQLESSMKRVKDDAAAHIASLKAAHEREIEKLLCQNAVENSSSRVAELNRKIATQEVLLKHFQGQVNELQGKQESLSLSQVREEILQKQITKLLEELKEAKENHTPEMKHFMGLERKIKQMEMRHKQREQELQQIIQQTRQVVETEQNKEVEKWKRLAQLKNRELDKFRTELDSILDVLRELHRQGVVVPVALADEESTAKEF.

Residues glutamate 19–threonine 44 are disordered. The span at glutamate 26 to proline 35 shows a compositional bias: polar residues. Residues serine 156 and serine 159 each carry the phosphoserine modification. Disordered regions lie at residues asparagine 171–glycine 235, aspartate 305–serine 342, and asparagine 449–serine 586. The span at glutamate 176 to proline 189 shows a compositional bias: basic and acidic residues. Acidic residues predominate over residues tyrosine 192–glutamate 204. Residues leucine 206–glutamate 220 show a composition bias toward basic and acidic residues. The span at asparagine 449–arginine 466 shows a compositional bias: polar residues. Serine 468 bears the Phosphoserine mark. Over residues proline 481–proline 496 the composition is skewed to basic residues. The segment covering alanine 504–glutamine 517 has biased composition (polar residues). Basic and acidic residues-rich tracts occupy residues leucine 522–lysine 532 and proline 567–aspartate 581. Coiled-coil stretches lie at residues lysine 610 to arginine 1120, glutamate 1170 to serine 1205, and cysteine 1234 to glutamine 1385.

It belongs to the CEP162 family. In terms of assembly, interacts with alpha-tubulin. Interacts with CPNE4. Interacts with CEP290.

It localises to the cytoplasm. It is found in the cytoskeleton. The protein localises to the microtubule organizing center. Its subcellular location is the centrosome. The protein resides in the centriole. It localises to the spindle. It is found in the nucleus. Its function is as follows. Required to promote assembly of the transition zone in primary cilia. Acts by specifically recognizing and binding the axonemal microtubule. Localizes to the distal ends of centrioles before ciliogenesis and directly binds to axonemal microtubule, thereby promoting and restricting transition zone formation specifically at the cilia base. Required to mediate CEP290 association with microtubules. The chain is Centrosomal protein of 162 kDa (Cep162) from Rattus norvegicus (Rat).